The chain runs to 279 residues: Energy-coupling factor transporter ATP-binding protein EcfA1 (279 aa).

The region spanning 5–240 (IELNNIQFNY…GEALVEMGLD (236 aa)) is the ABC transporter domain. 40–47 (GHNGSGKS) provides a ligand contact to ATP.

The protein belongs to the ABC transporter superfamily. Energy-coupling factor EcfA family. As to quaternary structure, forms a stable energy-coupling factor (ECF) transporter complex composed of 2 membrane-embedded substrate-binding proteins (S component), 2 ATP-binding proteins (A component) and 2 transmembrane proteins (T component).

Its subcellular location is the cell membrane. In terms of biological role, ATP-binding (A) component of a common energy-coupling factor (ECF) ABC-transporter complex. Unlike classic ABC transporters this ECF transporter provides the energy necessary to transport a number of different substrates. This is Energy-coupling factor transporter ATP-binding protein EcfA1 from Enterococcus faecalis (strain ATCC 700802 / V583).